The primary structure comprises 381 residues: RxLR effector protein 54 (381 aa).

An N-terminal signal peptide occupies residues 1–19 (MRFQSIMMLTITCAGTCLA). The short motif at 57-75 (RFLRFDTVARDTAGNDEER) is the RxLR-dEER element. WY-domain regions lie at residues 97-150 (SAEE…ANNG), 151-198 (NQAF…SLSG), 199-247 (NWIR…WNKN), 251-299 (FFGD…LLTS), and 302-354 (SHKT…RDKI). The short motif at 372-381 (KPLDFDWEIV) is the ATG8 interacting motif element.

It belongs to the RxLR effector family. In terms of assembly, interacts via its C-terminal AIM with host ATG8CL.

Its subcellular location is the secreted. The protein resides in the host nucleus. It localises to the host cytoplasm. Its function is as follows. Effector that specifically binds host autophagy protein ATG8CL of the ATG8 family to stimulate autophagosome formation and subsequent autophagy rather than blocking autophagic flux. The pathogen remodels host-microbe interface by co-opting the host autophagy machinery which plays a key role in plant immunity. PexRD54 competes with the autophagy cargo receptor Joka2 to deplete it out of ATG8CL complexes and interferes with Joka2's positive effect on pathogen defense. The chain is RxLR effector protein 54 from Phytophthora infestans (strain T30-4) (Potato late blight agent).